A 397-amino-acid chain; its full sequence is Subtilisin-like protease 3 (397 aa).

An N-terminal signal peptide occupies residues 1–19 (MGCIKVISVFLAAIAAVDA). Residues 20–116 (RAFFHNRGGS…VEHDRVVKLA (97 aa)) constitute a propeptide that is removed on maturation. An Inhibitor I9 domain is found at 35–116 (SYIVVMKDGV…VEHDRVVKLA (82 aa)). Residues 126 to 397 (TWGLGRVSHR…NRLLYNGSGQ (272 aa)) enclose the Peptidase S8 domain. Residues aspartate 158 and histidine 189 each act as charge relay system in the active site. An N-linked (GlcNAc...) asparagine glycan is attached at asparagine 250. The active-site Charge relay system is serine 344. The N-linked (GlcNAc...) asparagine glycan is linked to asparagine 393.

The protein belongs to the peptidase S8 family.

The protein resides in the secreted. Functionally, secreted subtilisin-like serine protease with keratinolytic activity that contributes to pathogenicity. The sequence is that of Subtilisin-like protease 3 (SUB3) from Trichophyton equinum (Horse ringworm fungus).